Consider the following 418-residue polypeptide: MRTKNEKSPLKAFMKQRRMGLNDFIQKIATNSSYACKHSEVQSILNISPPQEPELLNENSSPPPSPSQQINLGPSSNPHAKPSDFQFLKIIGKGSFGKVLLARHNADEKFYAVKVLQKKAILKKKEEKHIMSERNVLLKNVKHPFLVGLHFSFQTTSRLYFILDYINGGELFYHLQRERCFLEPRARFYAAEIASALGYLHSLNIVYRDLKPENILLDSQGHIILTDFGLCKENIEPNGTTSTFCGTPEYLAPEVLHKQPYDRTVDWWCLGAVLYEMLYGLPPFYSRNTAEMYDNILNKPLQLKPNITNSARNLLEGLLQKDRTKRIGAKNDFMEIKNHMFFSPINWDDLINKKITPPFNPNVSGPSDLQHFDPEFTEEPVPNSIGQSPDSILITASIKEAAEAFMGFSYAPPMESYL.

The interval 50-78 (PQEPELLNENSSPPPSPSQQINLGPSSNP) is disordered. Residues 68 to 78 (QQINLGPSSNP) show a composition bias toward polar residues. In terms of domain architecture, Protein kinase spans 85 to 342 (FQFLKIIGKG…FMEIKNHMFF (258 aa)). ATP-binding positions include 91 to 99 (IGKGSFGKV) and K114. D209 serves as the catalytic Proton acceptor. The 76-residue stretch at 343 to 418 (SPINWDDLIN…SYAPPMESYL (76 aa)) folds into the AGC-kinase C-terminal domain.

It belongs to the protein kinase superfamily. AGC Ser/Thr protein kinase family.

The protein localises to the cytoplasm. Its subcellular location is the nucleus. It localises to the endoplasmic reticulum. The enzyme catalyses L-seryl-[protein] + ATP = O-phospho-L-seryl-[protein] + ADP + H(+). The catalysed reaction is L-threonyl-[protein] + ATP = O-phospho-L-threonyl-[protein] + ADP + H(+). In terms of biological role, protein kinase that may play an important role in cellular stress response. Plays an important role in activating certain potassium, sodium, and chloride channels, suggesting an involvement in the regulation of processes such as cell survival, neuronal excitability, and renal sodium excretion. In Xenopus tropicalis (Western clawed frog), this protein is Serine/threonine-protein kinase Sgk1 (sgk1).